The following is a 581-amino-acid chain: Laccase-1 (581 aa).

Positions Met1 to Ala25 are cleaved as a signal peptide. 2 consecutive Plastocyanin-like domains span residues Asn34–Pro150 and Glu161–Lys312. N-linked (GlcNAc...) asparagine glycosylation occurs at Asn80. Cu cation is bound by residues His84, His86, His129, and His131. Asn241, Asn300, Asn386, and Asn403 each carry an N-linked (GlcNAc...) asparagine glycan. A Plastocyanin-like 3 domain is found at Asp429–Pro565. His482, His485, His487, His544, Cys545, His546, and His550 together coordinate Cu cation.

It belongs to the multicopper oxidase family. Cu cation serves as cofactor. Expressed in roots, stems and flowers.

The protein localises to the secreted. It localises to the extracellular space. The protein resides in the apoplast. It catalyses the reaction 4 hydroquinone + O2 = 4 benzosemiquinone + 2 H2O. In terms of biological role, lignin degradation and detoxification of lignin-derived products. This chain is Laccase-1 (LAC1), found in Arabidopsis thaliana (Mouse-ear cress).